The sequence spans 576 residues: Vesicular glutamate transporter 1 (576 aa).

Topologically, residues 1-63 (MEFRKEEFKK…CTCFGLPRRY (63 aa)) are cytoplasmic. The chain crosses the membrane as a helical span at residues 64–84 (IIAIMSGLGFCISFGIRCNLG). The Vesicular portion of the chain corresponds to 85-116 (VAIVSMVNNNTVYKGNKLVIEQAQFNWDPETV). Residue Asn93 is glycosylated (N-linked (GlcNAc...) asparagine). A helical transmembrane segment spans residues 117 to 137 (GMIHGSFFWGYIVTQIPGGYI). Over 138 to 140 (CQK) the chain is Cytoplasmic. A helical membrane pass occupies residues 141–161 (FAANRVFGFAIVATSTLNMLI). Residues 162–168 (PSAARVH) lie on the Vesicular side of the membrane. Residues 169–189 (FACVICVRILQGLVEGVTYPA) traverse the membrane as a helical segment. Residues 190–208 (CHGIWSKWAPPLERSRLAT) are Cytoplasmic-facing. The chain crosses the membrane as a helical span at residues 209 to 229 (TAFCGSYAGAVVAMPLAGVLV). Over 230 to 236 (QYSGWSS) the chain is Vesicular. The helical transmembrane segment at 237 to 257 (VFYVYGSFGITWYMFWILVSY) threads the bilayer. Topologically, residues 258–297 (ESPAQHPTISEEERKYIEESIGESTGFMNPMAKFKAPWRK) are cytoplasmic. Residues 298–320 (FFTSMPVYAIIVANFCRSWTFYL) form a helical membrane-spanning segment. Residues 321–341 (LLISQPAYFEEVFGFAISKVG) are Vesicular-facing. Residues 342–362 (LLSALPHLVMTIIVPIGGQIA) traverse the membrane as a helical segment. The Cytoplasmic portion of the chain corresponds to 363–378 (DFLRTKRIMSTTNVRK). A helical membrane pass occupies residues 379 to 399 (MMNCGGFGMEATLLLVVGYSH). Residues 400–401 (SR) are Vesicular-facing. The helical transmembrane segment at 402–422 (GVAISFLVLAVGFSGFAISGF) threads the bilayer. The Cytoplasmic portion of the chain corresponds to 423-435 (NVNHLDIAPRYAS). Residues 436–456 (ILMGISNGVGTLSGMVCPLIV) form a helical membrane-spanning segment. At 457-469 (GAMTKHKTREEWQ) the chain is on the vesicular side. A helical transmembrane segment spans residues 470–490 (YVFLIASLVHYGGVVFYGIFA). At 491–576 (SGEKQPWAEP…YGTVAERDLS (86 aa)) the chain is on the cytoplasmic side. Positions 517–552 (ADESEEQTQAHGGYGSYGATQTTSQQNGGWATDWEK) are disordered. Over residues 534–545 (GATQTTSQQNGG) the composition is skewed to polar residues.

This sequence belongs to the major facilitator superfamily. Sodium/anion cotransporter family. VGLUT subfamily.

Its subcellular location is the cytoplasmic vesicle. The protein resides in the secretory vesicle. The protein localises to the synaptic vesicle membrane. It localises to the cell membrane. It is found in the synapse. Its subcellular location is the synaptosome. The enzyme catalyses L-glutamate(out) = L-glutamate(in). The catalysed reaction is chloride(in) = chloride(out). It carries out the reaction 3 Na(+)(out) + phosphate(out) = 3 Na(+)(in) + phosphate(in). It catalyses the reaction phosphate(in) = phosphate(out). The enzyme catalyses K(+)(in) + H(+)(out) = K(+)(out) + H(+)(in). With respect to regulation, chloride channel activity is allosterically activated by lumenal H(+) and Cl(-) leading to synaptic vesicles acidification. The L-glutamate transport activity is allosterically activated by lumenal H(+) and Cl(-). The allosteric activation by H(+) efficiently prevents non-vesicular efflux across the plasma membrane, thereby restricting L-glutamate transport activity to acidic membranes such as synaptic vesicles. Functionally, multifunctional transporter that transports L-glutamate as well as multiple ions such as chloride, proton, potassium, sodium and phosphate. At the synaptic vesicle membrane, mainly functions as an uniporter which transports preferentially L-glutamate but also phosphate from the cytoplasm into synaptic vesicles at presynaptic nerve terminals of excitatory neural cells. The L-glutamate or phosphate uniporter activity is electrogenic and is driven by the proton electrochemical gradient, mainly by the electrical gradient established by the vacuolar H(+)-ATPase across the synaptic vesicle membrane. In addition, functions as a chloride channel that allows a chloride permeation through the synaptic vesicle membrane that affects the proton electrochemical gradient and promotes synaptic vesicles acidification. Moreover, may function as a K(+)/H(+) antiport allowing to maintain the electrical gradient and to decrease chemical gradient and therefore sustain vesicular glutamate uptake. The vesicular K(+)/H(+) antiport activity is electroneutral. At the plasma membrane, following exocytosis, functions as a symporter of Na(+) and phosphate from the extracellular space to the cytoplasm allowing synaptic phosphate homeostasis regulation. The symporter activity is driven by an inside negative membrane potential and is electrogenic. Is necessary for synaptic signaling of visual-evoked responses from photoreceptors. The sequence is that of Vesicular glutamate transporter 1 from Xenopus laevis (African clawed frog).